We begin with the raw amino-acid sequence, 514 residues long: 2,3-bisphosphoglycerate-independent phosphoglycerate mutase (514 aa).

Residues D14 and S64 each contribute to the Mn(2+) site. S64 serves as the catalytic Phosphoserine intermediate. Substrate contacts are provided by residues H125, 155 to 156, R187, R193, 263 to 266, and K336; these read RD and RADR. Residues D403, H407, D444, H445, and H463 each contribute to the Mn(2+) site.

It belongs to the BPG-independent phosphoglycerate mutase family. In terms of assembly, monomer. The cofactor is Mn(2+).

It carries out the reaction (2R)-2-phosphoglycerate = (2R)-3-phosphoglycerate. It functions in the pathway carbohydrate degradation; glycolysis; pyruvate from D-glyceraldehyde 3-phosphate: step 3/5. Catalyzes the interconversion of 2-phosphoglycerate and 3-phosphoglycerate. The protein is 2,3-bisphosphoglycerate-independent phosphoglycerate mutase of Shigella dysenteriae serotype 1 (strain Sd197).